Here is a 142-residue protein sequence, read N- to C-terminus: U1 small nuclear ribonucleoprotein C (142 aa).

The segment at 4-36 adopts a Matrin-type zinc-finger fold; that stretch reads YYCDYCDTFLTHDSPSVRKTHNGGRKHKDNVRM.

Belongs to the U1 small nuclear ribonucleoprotein C family. U1 snRNP is composed of the 7 core Sm proteins B/B', D1, D2, D3, E, F and G that assemble in a heptameric protein ring on the Sm site of the small nuclear RNA to form the core snRNP, and at least 3 U1 snRNP-specific proteins U1-70K, U1-A and U1-C. U1-C interacts with U1 snRNA and the 5' splice-site region of the pre-mRNA.

The protein resides in the nucleus. Its function is as follows. Component of the spliceosomal U1 snRNP, which is essential for recognition of the pre-mRNA 5' splice-site and the subsequent assembly of the spliceosome. U1-C is directly involved in initial 5' splice-site recognition for both constitutive and regulated alternative splicing. The interaction with the 5' splice-site seems to precede base-pairing between the pre-mRNA and the U1 snRNA. Stimulates commitment or early (E) complex formation by stabilizing the base pairing of the 5' end of the U1 snRNA and the 5' splice-site region. The sequence is that of U1 small nuclear ribonucleoprotein C from Caenorhabditis briggsae.